The following is a 550-amino-acid chain: Arginine--tRNA ligase (550 aa).

The 'HIGH' region signature appears at 130–140 (ANPTGPIHIGG).

The protein belongs to the class-I aminoacyl-tRNA synthetase family. Monomer.

The protein localises to the cytoplasm. It carries out the reaction tRNA(Arg) + L-arginine + ATP = L-arginyl-tRNA(Arg) + AMP + diphosphate. The sequence is that of Arginine--tRNA ligase from Mycobacterium sp. (strain KMS).